Consider the following 362-residue polypeptide: Aminomethyltransferase (362 aa).

It belongs to the GcvT family. As to quaternary structure, the glycine cleavage system is composed of four proteins: P, T, L and H.

The enzyme catalyses N(6)-[(R)-S(8)-aminomethyldihydrolipoyl]-L-lysyl-[protein] + (6S)-5,6,7,8-tetrahydrofolate = N(6)-[(R)-dihydrolipoyl]-L-lysyl-[protein] + (6R)-5,10-methylene-5,6,7,8-tetrahydrofolate + NH4(+). Its function is as follows. The glycine cleavage system catalyzes the degradation of glycine. In Listeria monocytogenes serotype 4a (strain HCC23), this protein is Aminomethyltransferase.